The primary structure comprises 147 residues: Ribonuclease VapC43 (147 aa).

The PINc domain occupies 3 to 139 (CVDVNVLVYA…ARFRRLRWRH (137 aa)). Residues aspartate 5 and aspartate 108 each coordinate Mg(2+).

Belongs to the PINc/VapC protein family. The cofactor is Mg(2+).

Functionally, toxic component of a type II toxin-antitoxin (TA) system. An RNase. Its toxic effect is neutralized by coexpression with cognate antitoxin VapB43. The polypeptide is Ribonuclease VapC43 (Mycobacterium tuberculosis (strain CDC 1551 / Oshkosh)).